Consider the following 173-residue polypeptide: Nicotinamide-nucleotide adenylyltransferase (173 aa).

It belongs to the archaeal NMN adenylyltransferase family.

It localises to the cytoplasm. The catalysed reaction is beta-nicotinamide D-ribonucleotide + ATP + H(+) = diphosphate + NAD(+). Its pathway is cofactor biosynthesis; NAD(+) biosynthesis; NAD(+) from nicotinamide D-ribonucleotide: step 1/1. This Methanolobus tindarius protein is Nicotinamide-nucleotide adenylyltransferase (ffdC).